A 627-amino-acid polypeptide reads, in one-letter code: DNA mismatch repair protein MutL (627 aa).

This sequence belongs to the DNA mismatch repair MutL/HexB family.

This protein is involved in the repair of mismatches in DNA. It is required for dam-dependent methyl-directed DNA mismatch repair. May act as a 'molecular matchmaker', a protein that promotes the formation of a stable complex between two or more DNA-binding proteins in an ATP-dependent manner without itself being part of a final effector complex. The chain is DNA mismatch repair protein MutL from Mesorhizobium japonicum (strain LMG 29417 / CECT 9101 / MAFF 303099) (Mesorhizobium loti (strain MAFF 303099)).